The primary structure comprises 566 residues: Alpha-keto-acid decarboxylase (566 aa).

Residue glutamate 61 coordinates thiamine diphosphate. Residues 396 to 478 (TSFYGMADHR…VVVNNDGYTV (83 aa)) are thiamine pyrophosphate binding. 3 residues coordinate Mg(2+): aspartate 446, asparagine 473, and glycine 475.

Belongs to the TPP enzyme family. A metal cation is required as a cofactor. Requires thiamine diphosphate as cofactor.

Decarboxylates branched-chain and aromatic alpha-keto acids to aldehydes. The sequence is that of Alpha-keto-acid decarboxylase (kdc) from Mycobacterium ulcerans (strain Agy99).